The primary structure comprises 314 residues: NADH-ubiquinone oxidoreductase chain 1 (314 aa).

The next 8 membrane-spanning stretches (helical) occupy residues 5 to 25 (IMPL…VAFL), 78 to 98 (FSPV…PYLI), 105 to 125 (LGVL…MIAG), 152 to 172 (ALIL…SFYF), 176 to 196 (YVWF…SCLA), 227 to 247 (LIFL…VVIF), 251 to 271 (DIYS…FIWV), and 294 to 314 (LSLN…SLLF).

Belongs to the complex I subunit 1 family.

It is found in the mitochondrion inner membrane. It carries out the reaction a ubiquinone + NADH + 5 H(+)(in) = a ubiquinol + NAD(+) + 4 H(+)(out). In terms of biological role, core subunit of the mitochondrial membrane respiratory chain NADH dehydrogenase (Complex I) that is believed to belong to the minimal assembly required for catalysis. Complex I functions in the transfer of electrons from NADH to the respiratory chain. The immediate electron acceptor for the enzyme is believed to be ubiquinone. This is NADH-ubiquinone oxidoreductase chain 1 (mt:ND1) from Anopheles gambiae (African malaria mosquito).